Consider the following 177-residue polypeptide: Thymidine kinase (177 aa).

Residue 11–18 (GPMFSGKS) coordinates ATP. Glutamate 83 (proton acceptor) is an active-site residue. Phenylalanine 113 is a substrate binding site. Zn(2+) is bound by residues cysteine 138 and cysteine 141. Position 157–161 (157–161 (IEIIG)) interacts with substrate. Zn(2+) is bound by residues cysteine 170 and cysteine 173.

This sequence belongs to the thymidine kinase family. As to quaternary structure, homotetramer. Two molecules of substrate bind to each enzyme tetramer.

It catalyses the reaction thymidine + ATP = dTMP + ADP + H(+). Functionally, phosphorylates thymidine and thymidine analogs, such as azidothymidine (AZT). Part of the salvage pathway for pyrimidine deoxyribonucleotide synthesis. This chain is Thymidine kinase (OPG101), found in Vaccinia virus (strain Copenhagen) (VACV).